The primary structure comprises 260 residues: Shikimate dehydrogenase (NADP(+)) (260 aa).

Residues 14–16 (SAS) and Thr60 contribute to the shikimate site. Catalysis depends on Lys64, which acts as the Proton acceptor. 2 residues coordinate shikimate: Asn85 and Asp100. NADP(+) is bound by residues 121–125 (GAGGA), 145–150 (NRTYER), and Phe201. Tyr203 is a shikimate binding site. Gly225 provides a ligand contact to NADP(+).

The protein belongs to the shikimate dehydrogenase family. As to quaternary structure, homodimer.

It catalyses the reaction shikimate + NADP(+) = 3-dehydroshikimate + NADPH + H(+). It functions in the pathway metabolic intermediate biosynthesis; chorismate biosynthesis; chorismate from D-erythrose 4-phosphate and phosphoenolpyruvate: step 4/7. Functionally, involved in the biosynthesis of the chorismate, which leads to the biosynthesis of aromatic amino acids. Catalyzes the reversible NADPH linked reduction of 3-dehydroshikimate (DHSA) to yield shikimate (SA). This Pyrobaculum islandicum (strain DSM 4184 / JCM 9189 / GEO3) protein is Shikimate dehydrogenase (NADP(+)).